The chain runs to 694 residues: Probable methyltransferase PMT11 (694 aa).

Residues 1-14 (MKPLTNGDLFKSPT) lie on the Cytoplasmic side of the membrane. The helical; Signal-anchor for type II membrane protein transmembrane segment at 15 to 32 (LIKISALVFVTVAFFYLG) threads the bilayer. At 33–694 (KHWSDDGYQQ…LTCEKRLLRA (662 aa)) the chain is on the lumenal side. N-linked (GlcNAc...) asparagine glycosylation is found at asparagine 69 and asparagine 77. The segment at 83–128 (IPATIRQQPPSVVADTEKVKVEANPPPPPPPSPSPPPPPGPVKSFG) is disordered. Positions 106–123 (NPPPPPPPSPSPPPPPGP) are enriched in pro residues. Residues asparagine 155, asparagine 378, and asparagine 423 are each glycosylated (N-linked (GlcNAc...) asparagine).

This sequence belongs to the methyltransferase superfamily.

The protein localises to the golgi apparatus membrane. This is Probable methyltransferase PMT11 from Arabidopsis thaliana (Mouse-ear cress).